Reading from the N-terminus, the 544-residue chain is Chaperonin GroEL (544 aa).

Residues 29–32 (TLGP), 86–90 (DGTTT), Gly-413, 476–478 (NAA), and Asp-492 contribute to the ATP site.

This sequence belongs to the chaperonin (HSP60) family. As to quaternary structure, forms a cylinder of 14 subunits composed of two heptameric rings stacked back-to-back. Interacts with the co-chaperonin GroES.

Its subcellular location is the cytoplasm. It localises to the secreted. The enzyme catalyses ATP + H2O + a folded polypeptide = ADP + phosphate + an unfolded polypeptide.. Its function is as follows. Together with its co-chaperonin GroES, plays an essential role in assisting protein folding. The GroEL-GroES system forms a nano-cage that allows encapsulation of the non-native substrate proteins and provides a physical environment optimized to promote and accelerate protein folding. The sequence is that of Chaperonin GroEL from Bacillus subtilis (strain 168).